A 508-amino-acid polypeptide reads, in one-letter code: Photosystem II CP47 reaction center protein (508 aa).

A run of 6 helical transmembrane segments spans residues 21–36, 101–115, 140–156, 203–218, 237–252, and 457–472; these read SVHI…WAGS, IVFS…IWHW, GIHL…FGAF, IAAG…FHLS, VLSS…AFVV, and SFAL…HGAR.

The protein belongs to the PsbB/PsbC family. PsbB subfamily. PSII is composed of 1 copy each of membrane proteins PsbA, PsbB, PsbC, PsbD, PsbE, PsbF, PsbH, PsbI, PsbJ, PsbK, PsbL, PsbM, PsbT, PsbX, PsbY, PsbZ, Psb30/Ycf12, at least 3 peripheral proteins of the oxygen-evolving complex and a large number of cofactors. It forms dimeric complexes. Binds multiple chlorophylls. PSII binds additional chlorophylls, carotenoids and specific lipids. is required as a cofactor.

Its subcellular location is the plastid. The protein localises to the chloroplast thylakoid membrane. In terms of biological role, one of the components of the core complex of photosystem II (PSII). It binds chlorophyll and helps catalyze the primary light-induced photochemical processes of PSII. PSII is a light-driven water:plastoquinone oxidoreductase, using light energy to abstract electrons from H(2)O, generating O(2) and a proton gradient subsequently used for ATP formation. This Panax ginseng (Korean ginseng) protein is Photosystem II CP47 reaction center protein.